A 556-amino-acid polypeptide reads, in one-letter code: Urocanate hydratase (556 aa).

Residues 52–53, glutamine 130, 176–178, glutamate 196, arginine 201, 242–243, 263–267, 273–274, and tyrosine 322 each bind NAD(+); these read GG, GMG, NA, QTSAH, and YL. The active site involves cysteine 410. NAD(+) is bound at residue glycine 492.

Belongs to the urocanase family. NAD(+) serves as cofactor.

The protein localises to the cytoplasm. The catalysed reaction is 4-imidazolone-5-propanoate = trans-urocanate + H2O. It participates in amino-acid degradation; L-histidine degradation into L-glutamate; N-formimidoyl-L-glutamate from L-histidine: step 2/3. Its function is as follows. Catalyzes the conversion of urocanate to 4-imidazolone-5-propionate. The polypeptide is Urocanate hydratase (Acidiphilium cryptum (strain JF-5)).